The sequence spans 184 residues: UPF0669 protein C6orf120 homolog (184 aa).

An N-terminal signal peptide occupies residues methionine 1–alanine 23. The N-linked (GlcNAc...) asparagine glycan is linked to asparagine 47.

Belongs to the UPF0669 family.

It localises to the secreted. In terms of biological role, may be involved in induction of apoptosis in CD4(+) T-cells, but not CD8(+) T-cells or hepatocytes. The polypeptide is UPF0669 protein C6orf120 homolog (Bos taurus (Bovine)).